The primary structure comprises 50 residues: Protein PsbN (50 aa).

The helical transmembrane segment at 14–34 threads the bilayer; the sequence is VAVTILAVLLALTGFGLWTAF.

Belongs to the PsbN family.

It localises to the cellular thylakoid membrane. May play a role in photosystem I and II biogenesis. The protein is Protein PsbN of Prochlorococcus marinus (strain MIT 9515).